The chain runs to 284 residues: NAD kinase (284 aa).

Asp-60 serves as the catalytic Proton acceptor. NAD(+) is bound by residues 60 to 61 (DG), 134 to 135 (NE), Arg-145, Lys-162, Asp-164, 175 to 180 (TAYSFS), and Gln-234.

This sequence belongs to the NAD kinase family. A divalent metal cation is required as a cofactor.

The protein resides in the cytoplasm. The catalysed reaction is NAD(+) + ATP = ADP + NADP(+) + H(+). In terms of biological role, involved in the regulation of the intracellular balance of NAD and NADP, and is a key enzyme in the biosynthesis of NADP. Catalyzes specifically the phosphorylation on 2'-hydroxyl of the adenosine moiety of NAD to yield NADP. The sequence is that of NAD kinase from Clostridium botulinum (strain Alaska E43 / Type E3).